The chain runs to 56 residues: MAAKGAREKIRLVSSAETGHFYTTDKNKRNMPEKMEIKKFDPVVRKHVIYREAKIK.

The protein belongs to the bacterial ribosomal protein bL33 family.

In Actinobacillus succinogenes (strain ATCC 55618 / DSM 22257 / CCUG 43843 / 130Z), this protein is Large ribosomal subunit protein bL33.